A 610-amino-acid polypeptide reads, in one-letter code: UvrABC system protein C (610 aa).

The region spanning 13–91 (HLPGVYRMYD…IKENQPKYNV (79 aa)) is the GIY-YIG domain. One can recognise a UVR domain in the interval 201 to 236 (GQVIEHLVQKMENAAQELDFEAAARFRDQIQSVRAV).

It belongs to the UvrC family. In terms of assembly, interacts with UvrB in an incision complex.

Its subcellular location is the cytoplasm. In terms of biological role, the UvrABC repair system catalyzes the recognition and processing of DNA lesions. UvrC both incises the 5' and 3' sides of the lesion. The N-terminal half is responsible for the 3' incision and the C-terminal half is responsible for the 5' incision. The sequence is that of UvrABC system protein C from Actinobacillus pleuropneumoniae serotype 3 (strain JL03).